A 319-amino-acid chain; its full sequence is Aspartate carbamoyltransferase catalytic subunit (319 aa).

Arg-57 and Thr-58 together coordinate carbamoyl phosphate. Lys-85 is an L-aspartate binding site. Residues Arg-107, His-135, and Gln-138 each contribute to the carbamoyl phosphate site. Positions 168 and 222 each coordinate L-aspartate. Residues Gly-263 and Pro-264 each coordinate carbamoyl phosphate.

Belongs to the aspartate/ornithine carbamoyltransferase superfamily. ATCase family. As to quaternary structure, heterododecamer (2C3:3R2) of six catalytic PyrB chains organized as two trimers (C3), and six regulatory PyrI chains organized as three dimers (R2).

The catalysed reaction is carbamoyl phosphate + L-aspartate = N-carbamoyl-L-aspartate + phosphate + H(+). It participates in pyrimidine metabolism; UMP biosynthesis via de novo pathway; (S)-dihydroorotate from bicarbonate: step 2/3. In terms of biological role, catalyzes the condensation of carbamoyl phosphate and aspartate to form carbamoyl aspartate and inorganic phosphate, the committed step in the de novo pyrimidine nucleotide biosynthesis pathway. The protein is Aspartate carbamoyltransferase catalytic subunit of Paracoccus denitrificans (strain Pd 1222).